The chain runs to 195 residues: Nucleoside triphosphate pyrophosphatase (195 aa).

Asp70 (proton acceptor) is an active-site residue.

It belongs to the Maf family. A divalent metal cation serves as cofactor.

It is found in the cytoplasm. It carries out the reaction a ribonucleoside 5'-triphosphate + H2O = a ribonucleoside 5'-phosphate + diphosphate + H(+). It catalyses the reaction a 2'-deoxyribonucleoside 5'-triphosphate + H2O = a 2'-deoxyribonucleoside 5'-phosphate + diphosphate + H(+). Functionally, nucleoside triphosphate pyrophosphatase. May have a dual role in cell division arrest and in preventing the incorporation of modified nucleotides into cellular nucleic acids. The chain is Nucleoside triphosphate pyrophosphatase from Microcystis aeruginosa (strain NIES-843 / IAM M-2473).